The primary structure comprises 192 residues: UPF0149 protein YgfB (192 aa).

The protein belongs to the UPF0149 family.

This chain is UPF0149 protein YgfB, found in Salmonella typhi.